Reading from the N-terminus, the 646-residue chain is Galactofuranosyltransferase GlfT2 (646 aa).

Residues Arg182, Gln211, Asn240, and Asp267 each contribute to the UDP-alpha-D-galactofuranose site. Mn(2+) contacts are provided by Asp267 and Asp269. Asp384 functions as the Proton acceptor in the catalytic mechanism. His408 serves as a coordination point for Mn(2+).

This sequence belongs to the glycosyltransferase 2 family. As to quaternary structure, homotetramer. Requires Mn(2+) as cofactor. Mg(2+) serves as cofactor.

It is found in the cell membrane. It carries out the reaction beta-D-galactofuranosyl-(1-&gt;5)-beta-D-galactofuranosyl-(1-&gt;4)-alpha-L-rhamnosyl-(1-&gt;3)-N-acetyl-alpha-D-glucosaminyl-diphospho-trans,octa-cis-decaprenol + 28 UDP-alpha-D-galactofuranose = [beta-D-galactofuranosyl-(1-&gt;5)-beta-D-galactofuranosyl-(1-&gt;6)]14-beta-D-galactofuranosyl-(1-&gt;5)-beta-D-galactofuranosyl-(1-&gt;4)-alpha-L-rhamnopyranosyl-(1-&gt;3)-N-acetyl-alpha-D-glucosaminyl-diphospho-trans,octa-cis-decaprenol + 28 UDP + 28 H(+). The protein operates within cell wall biogenesis; cell wall polysaccharide biosynthesis. Functionally, involved in the galactan polymerization of the arabinogalactan (AG) region of the mycolylarabinogalactan-peptidoglycan (mAGP) complex, an essential component of the mycobacteria cell wall. Thus, successively transfers approximately 28 galactofuranosyl (Galf) residues from UDP-galactofuranose (UDP-Galf) onto the galactofuranosyl-galactofuranosyl-rhamnosyl-GlcNAc-diphospho-decaprenol (Galf-Galf-Rha-GlcNAc-PP-C50) acceptor produced by GlfT1, with alternating 1-&gt;5 and 1-&gt;6 links, forming a galactan domain with approximately 30 galactofuranosyl residues. This is Galactofuranosyltransferase GlfT2 from Mycolicibacterium smegmatis (strain ATCC 700084 / mc(2)155) (Mycobacterium smegmatis).